A 20-amino-acid chain; its full sequence is Toxin CpTx-4a (20 aa).

It belongs to the spider toxin CSTX family. In terms of tissue distribution, expressed by the venom gland.

It localises to the secreted. Spider venom toxin that exhibits cytolytic activity by forming an alpha-helix across the membrane. Lethal to insect larvae. The protein is Toxin CpTx-4a of Cheiracanthium punctorium (Yellow sac spider).